The primary structure comprises 572 residues: NADH-ubiquinone oxidoreductase chain 5 (572 aa).

16 consecutive transmembrane segments (helical) span residues 4 to 24 (ISFVNLISMSLSCFLLSLYFL), 44 to 64 (IVMTFLFDWMSLLFMSFVLMI), 86 to 106 (IMLVLMFVLSMMLLIISPNLI), 107 to 127 (SILLGWDGLGLVSYCLVIYFQ), 147 to 167 (VALLLSIAWMLNYGSWNYIFY), 170 to 190 (IMQNEFEMLMIGSLVMLAAMT), 217 to 237 (SSTLVTAGVYLLIRFNIILST), 239 to 259 (WLGQLMLLLSGLTMFMAGLGA), 268 to 288 (IIALSTLSQLGLMMSILSMGF), 294 to 314 (FHLLTHALFKALLFMCAGAII), 337 to 357 (SACFNVSNLALCGMPFLAGFY), 372 to 394 (NMFSFFLYYFSTGLTVSYSFRLV), 422 to 442 (MGLLIMSIIGGSMLNWLIFPF), 457 to 477 (LFVCIVGGLFGYLISLSNLFF), 490 to 510 (FLGSMWFMPYISTYGMIFYPL), and 552 to 572 (LKIYLLLFVFWILILLILLFL).

Belongs to the complex I subunit 5 family.

It is found in the mitochondrion inner membrane. The catalysed reaction is a ubiquinone + NADH + 5 H(+)(in) = a ubiquinol + NAD(+) + 4 H(+)(out). Core subunit of the mitochondrial membrane respiratory chain NADH dehydrogenase (Complex I) that is believed to belong to the minimal assembly required for catalysis. Complex I functions in the transfer of electrons from NADH to the respiratory chain. The immediate electron acceptor for the enzyme is believed to be ubiquinone. This Drosophila melanogaster (Fruit fly) protein is NADH-ubiquinone oxidoreductase chain 5 (mt:ND5).